Reading from the N-terminus, the 426-residue chain is MGSSTTEPDVGTTSNIETTTTLQNKNVNEVDQNKKSEQSNPSFKEVVLKDIGLGEATDLENVSDDVFNNYLAIRLERERKEIELLKESNLEKLSVIIKNCIECNSFTDETMKRLINLVDNNYNNSVHFSPKSKRRKLESTSPPMSSSSVPNKETNNIQQSNSYQLRNNYDEEQENQKSQTQGSKSLLSRPNIYSFPPKQTQPASQQHVQLAAIVQRQSTLTTPLSSTYGSNSNNSMNTQLPLSDKSLRSNVQEKIVQQGSMSQRDIINGSNMSSQYSSQVYPPGYYQTRYGQQMVVVYPDSDSPQINQTSTIQHQQQLPHTYPPHYHQQQQLHQNQLVPQQHQQLQQQSISKHQLFGQKNPMSPQSHYLPNNESQNLGVINHRRSFSSGTYPVVNSRSKSPDRSMPLTVQKQMNFLIHTPKHPPPT.

Polar residues predominate over residues 1–30 (MGSSTTEPDVGTTSNIETTTTLQNKNVNEV). 3 disordered regions span residues 1 to 41 (MGSS…QSNP), 123 to 158 (NNSV…NNIQ), and 170 to 208 (DEEQ…QQHV). Over residues 139-150 (STSPPMSSSSVP) the composition is skewed to low complexity. 2 stretches are compositionally biased toward polar residues: residues 176–188 (QKSQ…SLLS) and 197–208 (PKQTQPASQQHV).

This sequence belongs to the POG1 family.

Its subcellular location is the nucleus. Transcriptional activator which promotes cell cycle recovery, after pheromone induced G1 arrest. May also be involved in stress-resistance. This is Transcriptional activator POG1 (POG1) from Vanderwaltozyma polyspora (strain ATCC 22028 / DSM 70294 / BCRC 21397 / CBS 2163 / NBRC 10782 / NRRL Y-8283 / UCD 57-17) (Kluyveromyces polysporus).